Reading from the N-terminus, the 132-residue chain is Secreted RxLR effector protein BLR08 (132 aa).

A signal peptide spans 1-22 (MRHKCLLAMAVVASMAFYSVIS). The N-linked (GlcNAc...) asparagine glycan is linked to asparagine 25. The interval 36 to 57 (NRRLRPRVEPTANELDKQSDVD) is disordered. Residues 37-83 (RRLRPRVEPTANELDKQSDVDTKLEADRRLGYPGESGFMLEGELEER) carry the RxLR-dEER motif. A helical transmembrane segment spans residues 111–131 (FFLGLFASVIGVSIISACYGI).

Belongs to the RxLR effector family. Interacts with host transcription factor NAC069.

The protein localises to the secreted. It localises to the host endoplasmic reticulum membrane. Functionally, secreted effector that inhibits stress-induced relocalization of the transcription factor NAC069 to the nucleus, thus affecting its broad role in abiotic and biotic stress responses. The protein is Secreted RxLR effector protein BLR08 of Bremia lactucae (Lettuce downy mildew).